The sequence spans 152 residues: Small ribosomal subunit protein bS16 (152 aa).

The segment covering 118 to 130 has biased composition (basic and acidic residues); sequence AEKHKAKASEKKA. The disordered stretch occupies residues 118-152; sequence AEKHKAKASEKKAAAAASADEAGSAAADDAEGSES. Residues 131–144 are compositionally biased toward low complexity; that stretch reads AAAASADEAGSAAA.

Belongs to the bacterial ribosomal protein bS16 family.

The chain is Small ribosomal subunit protein bS16 from Beutenbergia cavernae (strain ATCC BAA-8 / DSM 12333 / CCUG 43141 / JCM 11478 / NBRC 16432 / NCIMB 13614 / HKI 0122).